Consider the following 310-residue polypeptide: Dihydroorotate dehydrogenase B (NAD(+)), catalytic subunit (310 aa).

FMN-binding positions include serine 19 and lysine 43 to alanine 44. Substrate-binding positions include lysine 43 and asparagine 67–leucine 71. Residues asparagine 97 and asparagine 125 each contribute to the FMN site. Residue asparagine 125 participates in substrate binding. Cysteine 128 (nucleophile) is an active-site residue. Lysine 163 and isoleucine 189 together coordinate FMN. Asparagine 190–threonine 191 contacts substrate. Residues glycine 215, glycine 241–glycine 242, and glycine 263–threonine 264 contribute to the FMN site.

The protein belongs to the dihydroorotate dehydrogenase family. Type 1 subfamily. In terms of assembly, heterotetramer of 2 PyrK and 2 PyrD type B subunits. FMN serves as cofactor.

It is found in the cytoplasm. It carries out the reaction (S)-dihydroorotate + NAD(+) = orotate + NADH + H(+). It participates in pyrimidine metabolism; UMP biosynthesis via de novo pathway; orotate from (S)-dihydroorotate (NAD(+) route): step 1/1. Functionally, catalyzes the conversion of dihydroorotate to orotate with NAD(+) as electron acceptor. The chain is Dihydroorotate dehydrogenase B (NAD(+)), catalytic subunit (pyrD) from Bacillus pumilus (strain SAFR-032).